The chain runs to 676 residues: Envelope glycoprotein (676 aa).

A signal peptide spans 1-32 (MGVTGILQLPRDRFKRTSFFLWVIILFQRTFS). The Extracellular segment spans residues 33-650 (IPLGVIHNST…NDNWWTGWRQ (618 aa)). N-linked (GlcNAc...) asparagine; by host glycosylation occurs at Asn-40. 5 disulfide bridges follow: Cys-53/Cys-609, Cys-108/Cys-135, Cys-121/Cys-147, Cys-511/Cys-556, and Cys-601/Cys-608. Positions 54–201 (RDKLSSTNQL…DFFSSHPLRE (148 aa)) are receptor-binding. N-linked (GlcNAc...) asparagine; by host glycans are attached at residues Asn-204, Asn-228, Asn-238, Asn-257, Asn-268, Asn-296, Asn-317, Asn-333, Asn-346, Asn-386, and Asn-413. The segment at 305–485 (ELSFTAVSNR…SGKLGLITNT (181 aa)) is mucin-like region. Over residues 314–335 (RAKNISGQSPARTSSDPGTNTT) the composition is skewed to polar residues. The tract at residues 314–337 (RAKNISGQSPARTSSDPGTNTTTE) is disordered. 2 disordered regions span residues 373–392 (TSLR…HNTP) and 402–479 (TQVE…SGKL). Over residues 414-427 (ASTTSDTPPATTAA) the composition is skewed to low complexity. N-linked (GlcNAc...) asparagine; by host glycosylation is found at Asn-436, Asn-454, and Asn-462. The segment covering 447–464 (ATTTSPQNHSETAGNNNT) has biased composition (polar residues). The fusion peptide stretch occupies residues 524–539 (GAAIGLAWIPYFGPAA). Residues 554-595 (LICGLRQLANETTQALQLFLRATTELRTFSILNRKAIDFLLQ) are a coiled coil. N-linked (GlcNAc...) asparagine; by host glycosylation occurs at Asn-563. Residues 615 to 634 (WTKNITDKIDQIIHDFVDKT) adopt a coiled-coil conformation. Asn-618 carries an N-linked (GlcNAc...) asparagine; by host glycan. A helical transmembrane segment spans residues 651 to 671 (WIPAGIGVTGVIIAVIALFCI). Residues Cys-670 and Cys-672 are each lipidated (S-palmitoyl cysteine; by host). Over 672-676 (CKFVF) the chain is Cytoplasmic.

The protein belongs to the filoviruses glycoprotein family. As to quaternary structure, homotrimer; each monomer consists of a GP1 and a GP2 subunit linked by disulfide bonds. The resulting peplomers (GP1,2) protrude from the virus surface as spikes. Interacts with host integrin alpha-V/ITGAV. Interacts with host CLEC10A. Binds also to host CD209 and CLEC4M/DC-SIGN(R). Interacts with host FOLR1. Interacts with BST2; this interaction inhibits the antiviral effect of BST2 and this allows viral release from infected cells. Interacts with host FCN1; this interaction enhances viral entry. Interacts with host TLR4; this interaction induces cell death in T-lymphocytes or proinflammatory cytokines and SOCS1 production in monocytes. In terms of assembly, interacts with host entry receptor NPC1. GP1 and GP2delta are part of GP1,2delta soluble complexes released by ectodomain shedding. The signal peptide region modulates GP's high mannose glycosylation, thereby determining the efficiency of the interactions with DC-SIGN(R). In terms of processing, N-glycosylated. Post-translationally, O-glycosylated in the mucin-like region. Palmitoylation of GP2 is not required for its function. In terms of processing, specific enzymatic cleavages in vivo yield mature proteins. The precursor is processed into GP1 and GP2 by host cell furin in the trans Golgi, and maybe by other host proteases, to yield the mature GP1 and GP2 proteins. The cleavage site corresponds to the furin optimal cleavage sequence [KR]-X-[KR]-R. This cleavage does not seem to be required for function. After the internalization of the virus into cell endosomes, GP1 C-terminus is removed by the endosomal proteases cathepsin B, cathepsin L, or both, leaving a 19-kDa N-terminal fragment which is further digested by cathepsin B. Proteolytic processing of GP1,2 by host ADAM17 can remove the transmembrane anchor of GP2 and leads to shedding of complexes consisting in GP1 and truncated GP2 (GP1,2delta).

It is found in the virion membrane. It localises to the host cell membrane. The protein localises to the secreted. Trimeric GP1,2 complexes form the virion surface spikes and mediate the viral entry processes, with GP1 acting as the receptor-binding subunit and GP2 as the membrane fusion subunit. At later times of infection, down-regulates the expression of various host cell surface molecules that are essential for immune surveillance and cell adhesion. Down-modulates several integrins including ITGA1, ITGA2, ITGA3, ITGA4, ITGA5, ITGA6, ITGAV and ITGB1. This decrease in cell adhesion molecules may lead to cell detachment, contributing to the disruption of blood vessel integrity and hemorrhages developed during infection (cytotoxicity). Interacts with host TLR4 and thereby stimulates the differentiation and activation of monocytes leading to bystander death of T-lymphocytes. Down-regulates as well the function of host natural killer cells. Counteracts the antiviral effect of host BST2/tetherin that restricts release of progeny virions from infected cells. However, cooperates with VP40 and host BST2 to activate canonical NF-kappa-B pathway in a manner dependent on neddylation. In terms of biological role, functions as a decoy for anti-GP1,2 antibodies thereby contributing to viral immune evasion. Interacts and activates host macrophages and dendritic cells inducing up-regulation of cytokine transcription. This effect is mediated throught activation of host TLR4. Its function is as follows. Responsible for binding to the receptor(s) on target cells. Interacts with CD209/DC-SIGN and CLEC4M/DC-SIGNR which act as cofactors for virus entry into dendritic cells (DCs) and endothelial cells. Binding to the macrophage specific lectin CLEC10A also seems to enhance virus infectivity. Interaction with FOLR1/folate receptor alpha may be a cofactor for virus entry in some cell types, although results are contradictory. Members of the Tyro3 receptor tyrosine kinase family also seem to be cell entry factors in filovirus infection. Once attached, the virions are internalized through clathrin-dependent endocytosis and/or macropinocytosis. After internalization of the virus into the endosomes of the host cell, proteolysis of GP1 by two cysteine proteases, CTSB/cathepsin B and CTSL/cathepsin L removes the glycan cap and allows GP1 binding to the host entry receptor NPC1. NPC1-binding, Ca(2+) and acidic pH induce a conformational change of GP2, which unmasks its fusion peptide and permit membranes fusion. Functionally, acts as a class I viral fusion protein. Under the current model, the protein has at least 3 conformational states: pre-fusion native state, pre-hairpin intermediate state, and post-fusion hairpin state. During viral and target cell membrane fusion, the coiled coil regions (heptad repeats) assume a trimer-of-hairpins structure, positioning the fusion peptide in close proximity to the C-terminal region of the ectodomain. The formation of this structure appears to drive apposition and subsequent fusion of viral and target cell membranes. Responsible for penetration of the virus into the cell cytoplasm by mediating the fusion of the membrane of the endocytosed virus particle with the endosomal membrane. Low pH in endosomes induces an irreversible conformational change in GP2, releasing the fusion hydrophobic peptide. In Epomops franqueti (Franquet's epauletted fruit bat), this protein is Envelope glycoprotein (GP).